A 333-amino-acid polypeptide reads, in one-letter code: 4-hydroxythreonine-4-phosphate dehydrogenase (333 aa).

Residues histidine 136 and threonine 137 each coordinate substrate. Positions 166, 211, and 266 each coordinate a divalent metal cation. Positions 274, 283, and 292 each coordinate substrate.

It belongs to the PdxA family. As to quaternary structure, homodimer. Requires Zn(2+) as cofactor. Mg(2+) is required as a cofactor. The cofactor is Co(2+).

Its subcellular location is the cytoplasm. The catalysed reaction is 4-(phosphooxy)-L-threonine + NAD(+) = 3-amino-2-oxopropyl phosphate + CO2 + NADH. Its pathway is cofactor biosynthesis; pyridoxine 5'-phosphate biosynthesis; pyridoxine 5'-phosphate from D-erythrose 4-phosphate: step 4/5. Its function is as follows. Catalyzes the NAD(P)-dependent oxidation of 4-(phosphooxy)-L-threonine (HTP) into 2-amino-3-oxo-4-(phosphooxy)butyric acid which spontaneously decarboxylates to form 3-amino-2-oxopropyl phosphate (AHAP). In Acidithiobacillus ferrooxidans (strain ATCC 23270 / DSM 14882 / CIP 104768 / NCIMB 8455) (Ferrobacillus ferrooxidans (strain ATCC 23270)), this protein is 4-hydroxythreonine-4-phosphate dehydrogenase.